A 701-amino-acid polypeptide reads, in one-letter code: MADLLFEIGAEEIPAGFVPGALRQLEDDLAKALADARLAHGEVRSVGTPRRLAVWARDVAPKQTDARTEAFGPPVAQAYDAEGKPTPAATGFARSQGVEVSALVRAQTPKGERVAVTKVEKGRRAEQVLPALLERLVGGLRFRKAMRSRFDEATFARPVRWMVALLGGRPLKVRHGEVTSGKVTYGHRFLAPKAIALKGTPDDYLAKLRRAHVLADPVERRAALLAELARAGKEAAGKVREDPALVEQVLYLVEEPTAVVGEFEKSNLELPPEVVISEMRNHQRYFAVVDGKGRLKNRFVAVSATRVKDPAVARHGYERVLRARLADARFFFEEDRKRKLHERIEDLGRRTFQAKLGSELDRAQRIGAVASALARALGKDALVADLLEASRLAKVDLNTGMVGEFPELQGTMGAHYARLEGLKPEIADAIEDHYKPIGAAEELPRSDLGALVAVADRLHSLVGIIGVGEKATGAADPFGLRRAAIGILRIVIARGYHLSLAAAVEQTLDALSGVKLAAGRALVAEQVLDFLRGRVRAAWTERFDADLVEAVLAAGSDDVVDARRRLEALADAKARPDFGSLAVAFKRVANIQEKAGGSGAAAVDPALLRDAAEKDLLAALEKVEQEVVARRAARDYPAVLRTVATLEPAVARFFDGVLVMAEDPALRANRLGLMRRVAALFSDLADFRKIQAEAPAQARAG.

It belongs to the class-II aminoacyl-tRNA synthetase family. As to quaternary structure, tetramer of two alpha and two beta subunits.

It localises to the cytoplasm. It catalyses the reaction tRNA(Gly) + glycine + ATP = glycyl-tRNA(Gly) + AMP + diphosphate. This chain is Glycine--tRNA ligase beta subunit, found in Anaeromyxobacter sp. (strain K).